Reading from the N-terminus, the 465-residue chain is Pancreatic triacylglycerol lipase (465 aa).

A signal peptide spans 1–16 (MLLLWILSLFLETVAG). 2 disulfide bridges follow: cysteine 20–cysteine 26 and cysteine 107–cysteine 118. Residue serine 169 is the Nucleophile of the active site. Aspartate 193 serves as the catalytic Charge relay system. 4 residues coordinate Ca(2+): glutamate 204, arginine 207, aspartate 209, and aspartate 212. A disulfide bridge connects residues cysteine 254 and cysteine 278. Histidine 280 serves as the catalytic Charge relay system. Disulfide bonds link cysteine 302–cysteine 313 and cysteine 316–cysteine 321. N-linked (GlcNAc...) asparagine glycans are attached at residues asparagine 351, asparagine 398, and asparagine 425. Positions 355 to 465 (WRYRIAVTLS…EEVLLTLQPC (111 aa)) constitute a PLAT domain. A disulfide bridge connects residues cysteine 449 and cysteine 465.

The protein belongs to the AB hydrolase superfamily. Lipase family. Forms a 1:1 stoichiometric complex with (pro)colipase/CLPS.

Its subcellular location is the secreted. It carries out the reaction a triacylglycerol + H2O = a diacylglycerol + a fatty acid + H(+). It catalyses the reaction 1,2,3-tributanoylglycerol + H2O = dibutanoylglycerol + butanoate + H(+). The enzyme catalyses 1,2,3-tri-(9Z-octadecenoyl)-glycerol + H2O = di-(9Z)-octadecenoylglycerol + (9Z)-octadecenoate + H(+). The catalysed reaction is all-trans-retinyl hexadecanoate + H2O = all-trans-retinol + hexadecanoate + H(+). It carries out the reaction 1,2-di-(9Z-octadecenoyl)-glycerol + H2O = (9Z-octadecenoyl)-glycerol + (9Z)-octadecenoate + H(+). With respect to regulation, inhibited by bile salts, is reactivated by (pro)colipase/CLPS. Its function is as follows. Plays an important role in fat metabolism. It preferentially splits the esters of long-chain fatty acids at positions 1 and 3, producing mainly 2-monoacylglycerol and free fatty acids, and shows considerably higher activity against insoluble emulsified substrates than against soluble ones. This is Pancreatic triacylglycerol lipase (PNLIP) from Cavia porcellus (Guinea pig).